The chain runs to 251 residues: Ditrans,polycis-undecaprenyl-diphosphate synthase ((2E,6E)-farnesyl-diphosphate specific) (251 aa).

Aspartate 21 is an active-site residue. Aspartate 21 contacts Mg(2+). Residues 22 to 25 (GNNR), tryptophan 26, histidine 38, and 66 to 68 (SSE) each bind substrate. The active-site Proton acceptor is asparagine 69. Substrate contacts are provided by residues tryptophan 70, arginine 72, arginine 189, and 195 to 197 (RIS). Position 208 (glutamate 208) interacts with Mg(2+).

This sequence belongs to the UPP synthase family. Homodimer. Mg(2+) serves as cofactor.

The enzyme catalyses 8 isopentenyl diphosphate + (2E,6E)-farnesyl diphosphate = di-trans,octa-cis-undecaprenyl diphosphate + 8 diphosphate. Functionally, catalyzes the sequential condensation of isopentenyl diphosphate (IPP) with (2E,6E)-farnesyl diphosphate (E,E-FPP) to yield (2Z,6Z,10Z,14Z,18Z,22Z,26Z,30Z,34E,38E)-undecaprenyl diphosphate (di-trans,octa-cis-UPP). UPP is the precursor of glycosyl carrier lipid in the biosynthesis of bacterial cell wall polysaccharide components such as peptidoglycan and lipopolysaccharide. This is Ditrans,polycis-undecaprenyl-diphosphate synthase ((2E,6E)-farnesyl-diphosphate specific) from Pseudomonas putida (strain ATCC 47054 / DSM 6125 / CFBP 8728 / NCIMB 11950 / KT2440).